The primary structure comprises 751 residues: MIKSEVLSGSASKTVGNSISNGTTVSTQNQGGKQNLIRQQQQQQQQQQQQQQQQQQQQLKHRTALQNYHFASTSEEILKKYSKYPASMSLHIFETHYRFNNSQDSQVIPKDSPMIKDFMKHVLKEQIPVEMCELIKDFAIRPYDGCIILQVYDHRNMVKTAVLQNRSTSSPSKDQDKKQQMVVSKPRTYRTLLRPTSLSIYYDLLYHTDSALHRFTDYLSLQMESEILTATNRELNLSVPLNPYNYDHLRPEPEPSGDMSQNSDEEIDQVKFQHRDAVEQPRRKIHQDEMVLHKSSEYEELMLLLSNKHKRPDDCSDKRLVVVSTSALPGSSLTGTSNTSTGTAAATPTPTSTTASAASQSSKQTTADGASTTDTKGKKGDKANGTSANQASASPTSVHPPIPTIPQNSVRATGQFMRLRLIEEIRKKRELEKLQQEAKIQAQANAIQSDSVPPSQQLAPQNTINSPVVTEPTKRSSPAAQNQPAPKRAKKETKKQLQAKAQAQAKAQAQAKAKVQTETPGPTPVQGQNSLSGPSVVNGSNVTSTANTPTMNNQSSLQQPSQASQPQIGSLNNNQQSQSQQQQQKNPQQTLQQQQQQQIFQNSLTPEEQKVYKQIQQNMATLAMMGQSGVTPTGQQLTPQQKQQAIQQAKNLQQQLFQRFPLYFQRMKQLQLIHQKRRLQQQQQQQQQQQQQQASNSSGGNQNNSSNQAAPQTQQFNQALPSTSEQSKPVTTSPEVKKKRTYQKKKNAPAN.

Disordered stretches follow at residues 1 to 42 (MIKS…QQQQ), 164 to 183 (QNRSTSSPSKDQDKKQQMVV), 328 to 411 (LPGS…NSVR), 445 to 597 (NAIQ…QQQQ), and 681 to 751 (QQQQ…APAN). Residues 7 to 38 (LSGSASKTVGNSISNGTTVSTQNQGGKQNLIR) show a composition bias toward polar residues. Low complexity predominate over residues 331-374 (SSLTGTSNTSTGTAAATPTPTSTTASAASQSSKQTTADGASTTD). Composition is skewed to polar residues over residues 387–397 (SANQASASPTS), 445–468 (NAIQSDSVPPSQQLAPQNTINSPV), and 475–484 (RSSPAAQNQP). Residues 496-516 (QLQAKAQAQAKAQAQAKAKVQ) are compositionally biased toward low complexity. The span at 517–553 (TETPGPTPVQGQNSLSGPSVVNGSNVTSTANTPTMNN) shows a compositional bias: polar residues. Composition is skewed to low complexity over residues 554-597 (QSSL…QQQQ) and 681-715 (QQQQQQQQQQQQQASNSSGGNQNNSSNQAAPQTQQ). Residues 716–734 (FNQALPSTSEQSKPVTTSP) are compositionally biased toward polar residues. The span at 737 to 751 (KKKRTYQKKKNAPAN) shows a compositional bias: basic residues.

Belongs to the SPT20 family. As to quaternary structure, component of the SAGA complex.

The protein resides in the nucleus. In terms of biological role, component of the transcription regulatory histone acetylation (HAT) complex SAGA. SAGA is involved in RNA polymerase II-dependent transcriptional regulation of approximately 10% of yeast genes. At the promoters, SAGA is required for recruitment of the basal transcription machinery. It influences RNA polymerase II transcriptional activity through different activities such as TBP interaction and promoter selectivity, interaction with transcription activators, and chromatin modification through histone acetylation and deubiquitination. SAGA acetylates nucleosomal histone H3 to some extent (to form H3K9ac, H3K14ac, H3K18ac and H3K23ac). SAGA interacts with DNA via upstream activating sequences (UASs). SPT20 plays a role in nuclear division and regulates hyphal and biofilm formation, which are crucial steps for virulence. The polypeptide is Transcription factor SPT20 (SPT20) (Candida albicans (strain SC5314 / ATCC MYA-2876) (Yeast)).